The primary structure comprises 388 residues: Dual-specificity RNA methyltransferase RlmN (388 aa).

Residue glutamate 109 is the Proton acceptor of the active site. A Radical SAM core domain is found at 115–354; the sequence is EEDRATLCVS…TIVRKTRGDD (240 aa). An intrachain disulfide couples cysteine 122 to cysteine 359. 3 residues coordinate [4Fe-4S] cluster: cysteine 129, cysteine 133, and cysteine 136. S-adenosyl-L-methionine is bound by residues 183 to 184, serine 215, 237 to 239, and asparagine 316; these read GE and SLH. The S-methylcysteine intermediate role is filled by cysteine 359.

The protein belongs to the radical SAM superfamily. RlmN family. [4Fe-4S] cluster is required as a cofactor.

It localises to the cytoplasm. The catalysed reaction is adenosine(2503) in 23S rRNA + 2 reduced [2Fe-2S]-[ferredoxin] + 2 S-adenosyl-L-methionine = 2-methyladenosine(2503) in 23S rRNA + 5'-deoxyadenosine + L-methionine + 2 oxidized [2Fe-2S]-[ferredoxin] + S-adenosyl-L-homocysteine. It carries out the reaction adenosine(37) in tRNA + 2 reduced [2Fe-2S]-[ferredoxin] + 2 S-adenosyl-L-methionine = 2-methyladenosine(37) in tRNA + 5'-deoxyadenosine + L-methionine + 2 oxidized [2Fe-2S]-[ferredoxin] + S-adenosyl-L-homocysteine. Specifically methylates position 2 of adenine 2503 in 23S rRNA and position 2 of adenine 37 in tRNAs. m2A2503 modification seems to play a crucial role in the proofreading step occurring at the peptidyl transferase center and thus would serve to optimize ribosomal fidelity. This Klebsiella pneumoniae (strain 342) protein is Dual-specificity RNA methyltransferase RlmN.